The sequence spans 310 residues: Mitochondrial 2-oxodicarboxylate carrier 1 (310 aa).

Transmembrane regions (helical) follow at residues 9-29 (LPFIYQFTAGAIAGVSELLVM), 78-97 (SHLYKGITSPILMEAPKRAI), 126-146 (IYSGASAGAVEAFVVAPFELV), 179-199 (GLEATIWRHVLWNAGYFGIIF), 219-239 (LIAGAIGGTVGCLLNTPFDVV), and 281-301 (MRLAPGGGLLLVVFTNVMDFF). Solcar repeat units follow at residues 9–108 (LPFI…FQTF), 120–204 (MTQK…IRKL), and 213–300 (EKTR…VMDF).

The protein belongs to the mitochondrial carrier (TC 2.A.29) family.

The protein localises to the mitochondrion inner membrane. Transports C5-C7 oxodicarboxylates across the inner membranes of mitochondria. Can transport 2-oxoadipate, 2-oxoglutarate, adipate, glutarate, 2-oxopimelate, oxaloacetate, citrate and malate. The main physiological role is probably to supply 2-oxoadipate and 2-oxoglutarate from the mitochondrial matrix to the cytosol where they are used in the biosynthesis of lysine and glutamate, respectively, and in lysine catabolism. The protein is Mitochondrial 2-oxodicarboxylate carrier 1 (ODC1) of Saccharomyces cerevisiae (strain ATCC 204508 / S288c) (Baker's yeast).